A 252-amino-acid chain; its full sequence is uncharacterized protein (252 aa).

A phosphoserine mark is found at Ser195 and Ser209.

In terms of tissue distribution, testis-specific. Highly expressed in spermatocytes (at protein level).

Essential for normal spermatogenesis and male fertility. This is an uncharacterized protein from Mus musculus (Mouse).